A 316-amino-acid polypeptide reads, in one-letter code: Acetyl-coenzyme A carboxylase carboxyl transferase subunit alpha (316 aa).

The CoA carboxyltransferase C-terminal domain maps to 39–293; the sequence is RLQDKSHALT…RQTLLAQLES (255 aa).

Belongs to the AccA family. Acetyl-CoA carboxylase is a heterohexamer composed of biotin carboxyl carrier protein (AccB), biotin carboxylase (AccC) and two subunits each of ACCase subunit alpha (AccA) and ACCase subunit beta (AccD).

It localises to the cytoplasm. The enzyme catalyses N(6)-carboxybiotinyl-L-lysyl-[protein] + acetyl-CoA = N(6)-biotinyl-L-lysyl-[protein] + malonyl-CoA. It participates in lipid metabolism; malonyl-CoA biosynthesis; malonyl-CoA from acetyl-CoA: step 1/1. Functionally, component of the acetyl coenzyme A carboxylase (ACC) complex. First, biotin carboxylase catalyzes the carboxylation of biotin on its carrier protein (BCCP) and then the CO(2) group is transferred by the carboxyltransferase to acetyl-CoA to form malonyl-CoA. In Azotobacter vinelandii (strain DJ / ATCC BAA-1303), this protein is Acetyl-coenzyme A carboxylase carboxyl transferase subunit alpha.